A 568-amino-acid chain; its full sequence is Hemagglutinin-neuraminidase (568 aa).

Over 1–18 (MSGAEGNTNKRTFRAVFR) the chain is Intravirion. The chain crosses the membrane as a helical span at residues 19-39 (TLIILITLTILALSAAILYEV). Residues 40 to 568 (THTSNGSESN…VPFLREVIIT (529 aa)) are Virion surface-facing. Asn-44 and Asn-111 each carry an N-linked (GlcNAc...) asparagine; by host glycan. 3 disulfide bridges follow: Cys-162–Cys-186, Cys-176–Cys-237, and Cys-228–Cys-241. Positions 224–229 (NRKSCS) are involved in neuraminidase activity. N-linked (GlcNAc...) asparagine; by host glycosylation is found at Asn-268 and Asn-280. 3 disulfides stabilise this stretch: Cys-334–Cys-455, Cys-366–Cys-376, and Cys-449–Cys-459. An N-linked (GlcNAc...) asparagine; by host glycan is attached at Asn-382. A glycan (N-linked (GlcNAc...) asparagine; by host) is linked at Asn-513. A disulfide bridge connects residues Cys-531 and Cys-542.

The protein belongs to the paramyxoviruses hemagglutinin-neuraminidase family. In terms of assembly, homotetramer; composed of disulfide-linked homodimers.

It is found in the virion membrane. It localises to the host cell membrane. The catalysed reaction is Hydrolysis of alpha-(2-&gt;3)-, alpha-(2-&gt;6)-, alpha-(2-&gt;8)- glycosidic linkages of terminal sialic acid residues in oligosaccharides, glycoproteins, glycolipids, colominic acid and synthetic substrates.. Functionally, attaches the virus to sialic acid-containing cell receptors and thereby initiating infection. Binding of HN protein to the receptor induces a conformational change that allows the F protein to trigger virion/cell membranes fusion. In terms of biological role, neuraminidase activity ensures the efficient spread of the virus by dissociating the mature virions from the neuraminic acid containing glycoproteins. In Simiiformes (SV41), this protein is Hemagglutinin-neuraminidase (HN).